A 161-amino-acid chain; its full sequence is 3-hydroxyacyl-[acyl-carrier-protein] dehydratase FabZ (161 aa).

His64 is a catalytic residue.

This sequence belongs to the thioester dehydratase family. FabZ subfamily.

It localises to the cytoplasm. The catalysed reaction is a (3R)-hydroxyacyl-[ACP] = a (2E)-enoyl-[ACP] + H2O. Functionally, involved in unsaturated fatty acids biosynthesis. Catalyzes the dehydration of short chain beta-hydroxyacyl-ACPs and long chain saturated and unsaturated beta-hydroxyacyl-ACPs. This chain is 3-hydroxyacyl-[acyl-carrier-protein] dehydratase FabZ, found in Paramagnetospirillum magneticum (strain ATCC 700264 / AMB-1) (Magnetospirillum magneticum).